The sequence spans 122 residues: S-adenosylmethionine decarboxylase proenzyme (122 aa).

The active-site Schiff-base intermediate with substrate; via pyruvic acid is the Ser-63. Position 63 is a pyruvic acid (Ser); by autocatalysis (Ser-63). His-68 functions as the Proton acceptor; for processing activity in the catalytic mechanism. Cys-83 functions as the Proton donor; for catalytic activity in the catalytic mechanism.

Belongs to the prokaryotic AdoMetDC family. Type 1 subfamily. Heterotetramer of two alpha and two beta chains arranged as a dimer of alpha/beta heterodimers. Pyruvate is required as a cofactor. Is synthesized initially as an inactive proenzyme. Formation of the active enzyme involves a self-maturation process in which the active site pyruvoyl group is generated from an internal serine residue via an autocatalytic post-translational modification. Two non-identical subunits are generated from the proenzyme in this reaction, and the pyruvate is formed at the N-terminus of the alpha chain, which is derived from the carboxyl end of the proenzyme. The post-translation cleavage follows an unusual pathway, termed non-hydrolytic serinolysis, in which the side chain hydroxyl group of the serine supplies its oxygen atom to form the C-terminus of the beta chain, while the remainder of the serine residue undergoes an oxidative deamination to produce ammonia and the pyruvoyl group blocking the N-terminus of the alpha chain.

It carries out the reaction S-adenosyl-L-methionine + H(+) = S-adenosyl 3-(methylsulfanyl)propylamine + CO2. The protein operates within amine and polyamine biosynthesis; S-adenosylmethioninamine biosynthesis; S-adenosylmethioninamine from S-adenosyl-L-methionine: step 1/1. Its function is as follows. Catalyzes the decarboxylation of S-adenosylmethionine to S-adenosylmethioninamine (dcAdoMet), the propylamine donor required for the synthesis of the polyamines spermine and spermidine from the diamine putrescine. This chain is S-adenosylmethionine decarboxylase proenzyme, found in Methanococcus maripaludis (strain DSM 14266 / JCM 13030 / NBRC 101832 / S2 / LL).